Reading from the N-terminus, the 241-residue chain is Ribose-5-phosphate isomerase A (241 aa).

Substrate-binding positions include threonine 28–threonine 31, aspartate 83–aspartate 86, and lysine 96–glycine 99. Glutamate 105 serves as the catalytic Proton acceptor. Residue lysine 123 participates in substrate binding.

This sequence belongs to the ribose 5-phosphate isomerase family. In terms of assembly, homodimer.

It catalyses the reaction aldehydo-D-ribose 5-phosphate = D-ribulose 5-phosphate. It functions in the pathway carbohydrate degradation; pentose phosphate pathway; D-ribose 5-phosphate from D-ribulose 5-phosphate (non-oxidative stage): step 1/1. Functionally, catalyzes the reversible conversion of ribose-5-phosphate to ribulose 5-phosphate. The protein is Ribose-5-phosphate isomerase A of Bradyrhizobium diazoefficiens (strain JCM 10833 / BCRC 13528 / IAM 13628 / NBRC 14792 / USDA 110).